A 235-amino-acid polypeptide reads, in one-letter code: Large ribosomal subunit protein uL1 (235 aa).

This sequence belongs to the universal ribosomal protein uL1 family. In terms of assembly, part of the 50S ribosomal subunit.

Its function is as follows. Binds directly to 23S rRNA. The L1 stalk is quite mobile in the ribosome, and is involved in E site tRNA release. Functionally, protein L1 is also a translational repressor protein, it controls the translation of the L11 operon by binding to its mRNA. In Fervidobacterium nodosum (strain ATCC 35602 / DSM 5306 / Rt17-B1), this protein is Large ribosomal subunit protein uL1.